The sequence spans 568 residues: Pre-mRNA-processing protein 45 (568 aa).

Disordered regions lie at residues E199–Q232, L281–I449, and A545–E568. Residues K286–L364 show a composition bias toward basic and acidic residues. Residues S365–R379 are compositionally biased toward low complexity. Composition is skewed to basic and acidic residues over residues R395 to A419, E426 to L440, and R557 to E568.

Belongs to the SNW family. In terms of assembly, associated with the spliceosome.

It is found in the nucleus. Its function is as follows. Involved in pre-mRNA splicing. This Yarrowia lipolytica (strain CLIB 122 / E 150) (Yeast) protein is Pre-mRNA-processing protein 45 (PRP45).